A 273-amino-acid chain; its full sequence is Phosphatidylglycerol--prolipoprotein diacylglyceryl transferase (273 aa).

7 consecutive transmembrane segments (helical) span residues 21–41 (ISVRWYGLMYLVGFMFALWLA), 60–80 (LLFAGFLGVVLGGRIGYVLFY), 95–115 (VWTGGMSFHGGLLGVITAMLW), 124–144 (FFGVADMIAPLVPFGLGMGRM), 176–196 (SQLYEMALEGIVLFFILNWFI), 203–223 (GSVSGLFLAGYGTFRFLVEYV), and 236–256 (FISMGQILSLPMVIIGVLMMV). Residue R143 coordinates a 1,2-diacyl-sn-glycero-3-phospho-(1'-sn-glycerol).

It belongs to the Lgt family.

The protein resides in the cell inner membrane. The catalysed reaction is L-cysteinyl-[prolipoprotein] + a 1,2-diacyl-sn-glycero-3-phospho-(1'-sn-glycerol) = an S-1,2-diacyl-sn-glyceryl-L-cysteinyl-[prolipoprotein] + sn-glycerol 1-phosphate + H(+). It functions in the pathway protein modification; lipoprotein biosynthesis (diacylglyceryl transfer). In terms of biological role, catalyzes the transfer of the diacylglyceryl group from phosphatidylglycerol to the sulfhydryl group of the N-terminal cysteine of a prolipoprotein, the first step in the formation of mature lipoproteins. In Vibrio atlanticus (strain LGP32) (Vibrio splendidus (strain Mel32)), this protein is Phosphatidylglycerol--prolipoprotein diacylglyceryl transferase.